Reading from the N-terminus, the 352-residue chain is MKGILLNGYGESLDLLEYKTDLPVPKPIKSQVLIKIHSTSINPLDNVMRKGYASSIVDLKLKLPIILGRECSGEIVEIGDSVWDYEIGDQVWSASPPFSMGSHCEYITVDESEISLKPKNLTHQQSASIPFASLTAWNAIYNVLPTNKKITTNTKILVNGGNGSVGFFILQLLKKHLNVNQVSTTCNIKHFEKLKKLTLVNETIDYNNLKINDNDNNKFDLIFNCYDGGKNQNENEKKCIDALKDGGNLIGFNGPLVKFSDKDGVLSGLPMGMMNQLNSSERIKKQYSKNVHLDYAIFSPSGSTLKQISKLYENNILIPNIDKQFNLNQIKDAYTCFENSNSNGKIIINNKF.

The 338-residue stretch at 11–348 (ESLDLLEYKT…NSNSNGKIII (338 aa)) folds into the Enoyl reductase (ER) domain. 4 residues coordinate NADPH: Val-165, Tyr-206, Ala-296, and Phe-298.

Belongs to the zinc-containing alcohol dehydrogenase family. Quinone oxidoreductase subfamily.

Its subcellular location is the mitochondrion matrix. It catalyses the reaction a quinone + NADH + H(+) = a quinol + NAD(+). It carries out the reaction a quinone + NADPH + H(+) = a quinol + NADP(+). It participates in cofactor biosynthesis; ubiquinone biosynthesis. Functionally, NAD(P)H oxidoreductase involved in the ubiquinone biosynthetic pathway. Required for the O-methyltransferase activity of coq3. The protein is NAD(P)H oxidoreductase RTN4IP1, mitochondrial (rtn4ip1) of Dictyostelium discoideum (Social amoeba).